The following is a 421-amino-acid chain: Bone morphogenetic protein 10 (421 aa).

An N-terminal signal peptide occupies residues 1-21 (MGSLVLPLSAVFCLVAHSASG). Residues 22–313 (SPIMGLEQSP…IDDSSARIRR (292 aa)) constitute a propeptide that is removed on maturation. Residues asparagine 67 and asparagine 131 are each glycosylated (N-linked (GlcNAc...) asparagine). 3 disulfide bridges follow: cysteine 320–cysteine 386, cysteine 349–cysteine 418, and cysteine 353–cysteine 420.

This sequence belongs to the TGF-beta family. As to quaternary structure, homodimer; disulfide-linked. Interacts with FBN1 (via N-terminal domain) and FBN2. Interacts with ENG. In terms of tissue distribution, in the embryo, expressed exclusively in the ventricular trabecular myocardium of the developing heart from 9.0 dpc-13.5 dpc. By 16.5 dpc-18.5 dpc, only detectable in atria. Highly expressed in the adult heart where it is found in the right atrium but not in the left atrium. Lower levels in adult liver and lung.

It is found in the secreted. Required for maintaining the proliferative activity of embryonic cardiomyocytes by preventing premature activation of the negative cell cycle regulator CDKN1C/p57KIP and maintaining the required expression levels of cardiogenic factors such as MEF2C and NKX2-5. Acts as a ligand for ACVRL1/ALK1, BMPR1A/ALK3 and BMPR1B/ALK6, leading to activation of SMAD1, SMAD5 and SMAD8 transcription factors. Inhibits endothelial cell migration and growth. May reduce cell migration and cell matrix adhesion in breast cancer cell lines. The protein is Bone morphogenetic protein 10 (Bmp10) of Mus musculus (Mouse).